The following is a 502-amino-acid chain: Histone acetyltransferase ESA1 (502 aa).

Residues 1–24 form a disordered region; that stretch reads MAGGTPGGEPTVGSGEPRLKSLAT. The Tudor-knot domain occupies 28-80; sequence IKTGCIAWVEKEGQPRRAEILSIKTTKSGKQFYCNFDNFNKRLDEWVPVIRLD. The segment covering 88-100 has biased composition (basic and acidic residues); the sequence is PNPEKEKPKDPKA. Residues 88-194 are disordered; the sequence is PNPEKEKPKD…EVKREPAEFS (107 aa). Basic residues predominate over residues 112 to 122; sequence QPSKKSQKRPS. Positions 142-151 are enriched in polar residues; the sequence is VENQNRQKSA. The span at 184–194 shows a compositional bias: basic and acidic residues; that stretch reads TEVKREPAEFS. Positions 216-490 constitute an MYST-type HAT domain; the sequence is SRIRNISKVQ…VDPTKIQWKP (275 aa). The C2HC MYST-type zinc-finger motif lies at 249–274; the sequence is IFICEFCLSYYGDLKAFTRHRKKCTL. The ESA1-RPD3 motif signature appears at 299–320; the sequence is RTWCRNLCLLSKMFLDHKTLYY. Lys316 carries the N6-acetyllysine; by autocatalysis modification. Acetyl-CoA contacts are provided by residues 357–361 and 366–372; these read ACILT and QRKGYGR. The active-site Proton donor/acceptor is Glu392. Ser396 is a binding site for acetyl-CoA.

Belongs to the MYST (SAS/MOZ) family. As to quaternary structure, component of the NuA4 histone acetyltransferase complex. Post-translationally, autoacetylation at Lys-316 is required for proper function.

Its subcellular location is the nucleus. The protein resides in the chromosome. The enzyme catalyses L-lysyl-[histone] + acetyl-CoA = N(6)-acetyl-L-lysyl-[histone] + CoA + H(+). It carries out the reaction L-lysyl-[protein] + acetyl-CoA = N(6)-acetyl-L-lysyl-[protein] + CoA + H(+). It catalyses the reaction 2-hydroxyisobutanoyl-CoA + L-lysyl-[protein] = N(6)-(2-hydroxyisobutanoyl)-L-lysyl-[protein] + CoA + H(+). The catalysed reaction is (2E)-butenoyl-CoA + L-lysyl-[protein] = N(6)-(2E)-butenoyl-L-lysyl-[protein] + CoA + H(+). Catalytic component of the NuA4 histone acetyltransferase (HAT) complex which is involved in epigenetic transcriptional activation of selected genes principally by acetylation of nucleosomal histones H4, H3, H2B, H2A and H2A variant H2A.Z. Acetylates histone H4 to form H4K5ac, H4K8ac, H4K12ac and H4K16ac, histone H3 to form H3K14ac, and histone H2A to form H2AK4ac and H2AK7ac. The NuA4 complex is involved in the DNA damage response and is required for chromosome segregation. The NuA4 complex plays a direct role in repair of DNA double-strand breaks (DSBs) through homologous recombination. Recruitment to promoters depends on H3K4me. Also acetylates non-histone proteins. In addition to protein acetyltransferase, can use different acyl-CoA substrates, such as 2-hydroxyisobutanoyl-CoA (2-hydroxyisobutyryl-CoA) or (2E)-butenoyl-CoA (crotonyl-CoA), and is able to mediate protein 2-hydroxyisobutyrylation and crotonylation, respectively. This Gibberella zeae (strain ATCC MYA-4620 / CBS 123657 / FGSC 9075 / NRRL 31084 / PH-1) (Wheat head blight fungus) protein is Histone acetyltransferase ESA1 (ESA1).